The sequence spans 36 residues: Cytochrome b6-f complex subunit 5 (36 aa).

The chain crosses the membrane as a helical span at residues 5-25 (LLAGIVLGLVPVTLAGLFVAA).

Belongs to the PetG family. As to quaternary structure, the 4 large subunits of the cytochrome b6-f complex are cytochrome b6, subunit IV (17 kDa polypeptide, PetD), cytochrome f and the Rieske protein, while the 4 small subunits are PetG, PetL, PetM and PetN. The complex functions as a dimer.

The protein resides in the cellular thylakoid membrane. Functionally, component of the cytochrome b6-f complex, which mediates electron transfer between photosystem II (PSII) and photosystem I (PSI), cyclic electron flow around PSI, and state transitions. PetG is required for either the stability or assembly of the cytochrome b6-f complex. The chain is Cytochrome b6-f complex subunit 5 from Acaryochloris marina (strain MBIC 11017).